The sequence spans 496 residues: uncharacterized protein (496 aa).

Residues 118-129 are compositionally biased toward basic and acidic residues; sequence LDRPFIKPRREN. Residues 118–187 form a disordered region; that stretch reads LDRPFIKPRR…NPHQSNRNTS (70 aa). The span at 151–187 shows a compositional bias: polar residues; sequence TSDSQYASPFENHSITNLPIGQKQPFNNPHQSNRNTS.

This is an uncharacterized protein from Acanthamoeba polyphaga mimivirus (APMV).